The primary structure comprises 182 residues: Protein canopy homolog 2 (182 aa).

The N-terminal stretch at 1–20 (MKGWGWLALLLGVLLGTAWA) is a signal peptide. The Saposin B-type domain occupies 24–175 (QDLHCGACRA…KRTDLCDHAL (152 aa)). 3 disulfides stabilise this stretch: cysteine 28–cysteine 171, cysteine 31–cysteine 164, and cysteine 86–cysteine 137. Residue serine 115 is modified to Phosphoserine. The Prevents secretion from ER signature appears at 179–182 (HDEL).

Belongs to the canopy family. Interacts with MYLIP/MIR.

The protein resides in the endoplasmic reticulum. Positive regulator of neurite outgrowth by stabilizing myosin regulatory light chain (MRLC). It prevents MIR-mediated MRLC ubiquitination and its subsequent proteasomal degradation. In Mus musculus (Mouse), this protein is Protein canopy homolog 2 (Cnpy2).